The chain runs to 99 residues: Large ribosomal subunit protein uL23 (99 aa).

This sequence belongs to the universal ribosomal protein uL23 family. In terms of assembly, part of the 50S ribosomal subunit. Contacts protein L29, and trigger factor when it is bound to the ribosome.

Functionally, one of the early assembly proteins it binds 23S rRNA. One of the proteins that surrounds the polypeptide exit tunnel on the outside of the ribosome. Forms the main docking site for trigger factor binding to the ribosome. The protein is Large ribosomal subunit protein uL23 of Clavibacter michiganensis subsp. michiganensis (strain NCPPB 382).